Reading from the N-terminus, the 330-residue chain is Aspartate--ammonia ligase (330 aa).

It belongs to the class-II aminoacyl-tRNA synthetase family. AsnA subfamily.

Its subcellular location is the cytoplasm. The enzyme catalyses L-aspartate + NH4(+) + ATP = L-asparagine + AMP + diphosphate + H(+). Its pathway is amino-acid biosynthesis; L-asparagine biosynthesis; L-asparagine from L-aspartate (ammonia route): step 1/1. In Histophilus somni (strain 2336) (Haemophilus somnus), this protein is Aspartate--ammonia ligase.